The sequence spans 323 residues: Putative HTH-type transcriptional regulatory protein Mbur_1811 (323 aa).

The region spanning 132–190 (LKEARMNVSMSLGALASELGVSRRTISKYEEGQMDASIDIVLHLEEILDMALAKSIDIL) is the HTH cro/C1-type domain. A DNA-binding region (H-T-H motif) is located at residues 143-162 (LGALASELGVSRRTISKYEE).

This is Putative HTH-type transcriptional regulatory protein Mbur_1811 from Methanococcoides burtonii (strain DSM 6242 / NBRC 107633 / OCM 468 / ACE-M).